A 581-amino-acid polypeptide reads, in one-letter code: Putative carboxypeptidase YOL153C (581 aa).

The Cytoplasmic segment spans residues 1–29 (MTETHHAPLPDVYPSSKQPTSSTYSKCKK). Lys-17 participates in a covalent cross-link: Glycyl lysine isopeptide (Lys-Gly) (interchain with G-Cter in ubiquitin). The chain crosses the membrane as a helical; Signal-anchor for type II membrane protein span at residues 30-46 (FGLPLIGLLTLLLAYIS). The Extracellular portion of the chain corresponds to 47–581 (SFTKPVPNST…IVNVNEYGHD (535 aa)). N-linked (GlcNAc...) asparagine glycans are attached at residues Asn-54 and Asn-76. Position 170 (His-170) interacts with Zn(2+). The active site involves Asp-172. Asp-207 contacts Zn(2+). Catalysis depends on Glu-241, which acts as the Proton acceptor. Zn(2+) is bound by residues Glu-242 and Asp-270. 2 N-linked (GlcNAc...) asparagine glycosylation sites follow: Asn-335 and Asn-428. His-550 is a Zn(2+) binding site.

The protein belongs to the peptidase M20A family. The cofactor is Zn(2+).

It is found in the membrane. The protein is Putative carboxypeptidase YOL153C of Saccharomyces cerevisiae (strain ATCC 204508 / S288c) (Baker's yeast).